A 443-amino-acid polypeptide reads, in one-letter code: Tol-Pal system protein TolB (443 aa).

An N-terminal signal peptide occupies residues 1-33 (MKIGIINTKIRTVFSAFACMIAASLVCTMPARA).

The protein belongs to the TolB family. In terms of assembly, the Tol-Pal system is composed of five core proteins: the inner membrane proteins TolA, TolQ and TolR, the periplasmic protein TolB and the outer membrane protein Pal. They form a network linking the inner and outer membranes and the peptidoglycan layer.

The protein localises to the periplasm. Functionally, part of the Tol-Pal system, which plays a role in outer membrane invagination during cell division and is important for maintaining outer membrane integrity. The sequence is that of Tol-Pal system protein TolB from Brucella ovis (strain ATCC 25840 / 63/290 / NCTC 10512).